Reading from the N-terminus, the 122-residue chain is Large ribosomal subunit protein uL14 (122 aa).

This sequence belongs to the universal ribosomal protein uL14 family. Part of the 50S ribosomal subunit. Forms a cluster with proteins L3 and L19. In the 70S ribosome, L14 and L19 interact and together make contacts with the 16S rRNA in bridges B5 and B8.

In terms of biological role, binds to 23S rRNA. Forms part of two intersubunit bridges in the 70S ribosome. The sequence is that of Large ribosomal subunit protein uL14 from Salinibacter ruber (strain DSM 13855 / M31).